Consider the following 185-residue polypeptide: Ribosome-recycling factor (185 aa).

This sequence belongs to the RRF family.

The protein resides in the cytoplasm. In terms of biological role, responsible for the release of ribosomes from messenger RNA at the termination of protein biosynthesis. May increase the efficiency of translation by recycling ribosomes from one round of translation to another. This is Ribosome-recycling factor from Lactococcus lactis subsp. cremoris (strain SK11).